Reading from the N-terminus, the 160-residue chain is MTNTKGKRRGTRYMFSRPFRKHGVVPLATYMRIYKKGDIVDIKGMGTVQKGMPHKCYHGKTGRVYNVTQHAVGIIVNKQVKGKILAKRINVRIEHIKHSKSRDSFLKRVKENDQKKKEAKEKGTWVQLNGQPAPPREAHFVRTNGKEPELLEPIPYEFMA.

2 stretches are compositionally biased toward basic and acidic residues: residues 112-123 (NDQKKKEAKEKG) and 136-146 (REAHFVRTNGK). The disordered stretch occupies residues 112–146 (NDQKKKEAKEKGTWVQLNGQPAPPREAHFVRTNGK).

It belongs to the eukaryotic ribosomal protein eL21 family. Component of the large ribosomal subunit.

It is found in the cytoplasm. Its subcellular location is the cytosol. The protein localises to the endoplasmic reticulum. Functionally, component of the large ribosomal subunit. The ribosome is a large ribonucleoprotein complex responsible for the synthesis of proteins in the cell. The sequence is that of Large ribosomal subunit protein eL21 (Rpl21) from Rattus norvegicus (Rat).